The chain runs to 420 residues: Putative polyketide beta-ketoacyl synthase 1 (420 aa).

A Ketosynthase family 3 (KS3) domain is found at 3-414 (QRRVAITGIE…GFQSAMVLTS (412 aa)). Catalysis depends on for beta-ketoacyl synthase activity residues Cys169, His307, and His344.

Belongs to the thiolase-like superfamily. Beta-ketoacyl-ACP synthases family.

Its pathway is antifungal biosynthesis; monensin biosynthesis. The protein is Putative polyketide beta-ketoacyl synthase 1 of Streptomyces virginiae (Streptomyces cinnamonensis).